Here is a 127-residue protein sequence, read N- to C-terminus: Holo-[acyl-carrier-protein] synthase (127 aa).

Mg(2+) is bound by residues D9 and E58.

This sequence belongs to the P-Pant transferase superfamily. AcpS family. The cofactor is Mg(2+).

The protein localises to the cytoplasm. It catalyses the reaction apo-[ACP] + CoA = holo-[ACP] + adenosine 3',5'-bisphosphate + H(+). Functionally, transfers the 4'-phosphopantetheine moiety from coenzyme A to a Ser of acyl-carrier-protein. This Shewanella sp. (strain ANA-3) protein is Holo-[acyl-carrier-protein] synthase.